A 577-amino-acid polypeptide reads, in one-letter code: Pyruvate decarboxylase (577 aa).

Positions 30 and 116 each coordinate substrate. The interval 388–482 is thiamine pyrophosphate binding; sequence TPGYGVNDFI…FLINNDGYTI (95 aa). Mg(2+)-binding residues include D450, N477, and G479. E483 lines the substrate pocket.

Belongs to the TPP enzyme family. As to quaternary structure, homotetramer. The cofactor is a metal cation. Thiamine diphosphate is required as a cofactor.

It carries out the reaction a 2-oxocarboxylate + H(+) = an aldehyde + CO2. This Aspergillus parasiticus protein is Pyruvate decarboxylase (pdcA).